A 249-amino-acid polypeptide reads, in one-letter code: MKFYKYCASGNDFVITNADRKEDRSALAKELCNRYEGIGADGFIVILPHEKYDFEWEFYNNDGSRAAMCGNGSRAAAHFAHHINKINPNMSFLTGAGIIKAKVNQDKVEVSLGKIKSVQNTFEELGKTWQLCNTGVPHLVHFCQNLDEFDTMLCQKMRQKYNANVNFVKILDENHLKVRTYERGVEDETLACGTGMGACFYLAFLNKKVQNKVKITPKSGEEVGFAYKNEELFFEGKVKYCFEANYNFF.

Positions 11 and 60 each coordinate substrate. C69 (proton donor) is an active-site residue. Residues 70–71, N164, and 182–183 each bind substrate; these read GN and ER. C192 functions as the Proton acceptor in the catalytic mechanism. 193-194 contacts substrate; that stretch reads GT.

It belongs to the diaminopimelate epimerase family. In terms of assembly, homodimer.

It localises to the cytoplasm. It carries out the reaction (2S,6S)-2,6-diaminopimelate = meso-2,6-diaminopimelate. Its pathway is amino-acid biosynthesis; L-lysine biosynthesis via DAP pathway; DL-2,6-diaminopimelate from LL-2,6-diaminopimelate: step 1/1. Its function is as follows. Catalyzes the stereoinversion of LL-2,6-diaminopimelate (L,L-DAP) to meso-diaminopimelate (meso-DAP), a precursor of L-lysine and an essential component of the bacterial peptidoglycan. The protein is Diaminopimelate epimerase of Campylobacter jejuni subsp. jejuni serotype O:2 (strain ATCC 700819 / NCTC 11168).